Reading from the N-terminus, the 184-residue chain is Tumor necrosis factor alpha-induced protein 8-like protein 2 (184 aa).

Serine 3 is modified (phosphoserine).

It belongs to the TNFAIP8 family. TNFAIP8L2 subfamily. In terms of assembly, may interact with CASP8; however, such result is unclear since could not reproduce the interaction with CASP8. Interacts with RAC1. Phosphorylated by TAK1/MAP3K7; this phosphorylation triggers association with BTRC and subsequent ubiquitination and degradation. In terms of processing, ubiquitinated in a BTRC-depdent manner; leading to degradation mediated through the proteasome pathway.

The protein localises to the cytoplasm. It is found in the nucleus. It localises to the lysosome. Functionally, acts as a negative regulator of innate and adaptive immunity by maintaining immune homeostasis. Plays a regulatory role in the Toll-like signaling pathway by determining the strength of LPS-induced signaling and gene expression. Inhibits TCR-mediated T-cell activation and negatively regulate T-cell function to prevent hyperresponsiveness. Also inhibits autolysosome formation via negatively modulating MTOR activation by interacting with RAC1 and promoting the disassociation of the RAC1-MTOR complex. Plays an essential role in NK-cell biology by acting as a checkpoint and displaying an expression pattern correlating with NK-cell maturation process and by negatively regulating NK-cell maturation and antitumor immunity. Mechanistically, suppresses IL-15-triggered mTOR activity in NK-cells. This chain is Tumor necrosis factor alpha-induced protein 8-like protein 2 (TNFAIP8L2), found in Callithrix jacchus (White-tufted-ear marmoset).